A 136-amino-acid polypeptide reads, in one-letter code: Protein NrdI (136 aa).

Belongs to the NrdI family.

Functionally, probably involved in ribonucleotide reductase function. This is Protein NrdI from Escherichia coli O127:H6 (strain E2348/69 / EPEC).